The chain runs to 306 residues: tRNA dimethylallyltransferase (306 aa).

11-18 (GPTAVGKS) lines the ATP pocket. 13 to 18 (TAVGKS) is a substrate binding site. The segment at 35–38 (DSIQ) is interaction with substrate tRNA.

Belongs to the IPP transferase family. In terms of assembly, monomer. Mg(2+) is required as a cofactor.

It carries out the reaction adenosine(37) in tRNA + dimethylallyl diphosphate = N(6)-dimethylallyladenosine(37) in tRNA + diphosphate. Its function is as follows. Catalyzes the transfer of a dimethylallyl group onto the adenine at position 37 in tRNAs that read codons beginning with uridine, leading to the formation of N6-(dimethylallyl)adenosine (i(6)A). This Borreliella burgdorferi (strain ATCC 35210 / DSM 4680 / CIP 102532 / B31) (Borrelia burgdorferi) protein is tRNA dimethylallyltransferase.